We begin with the raw amino-acid sequence, 238 residues long: Lactate utilization protein A (238 aa).

This sequence belongs to the LutA/YkgE family.

Is involved in L-lactate degradation and allows cells to grow with lactate as the sole carbon source. The sequence is that of Lactate utilization protein A from Bacillus velezensis (strain DSM 23117 / BGSC 10A6 / LMG 26770 / FZB42) (Bacillus amyloliquefaciens subsp. plantarum).